Reading from the N-terminus, the 140-residue chain is Translation initiation factor 2 subunit beta (140 aa).

Belongs to the eIF-2-beta/eIF-5 family. As to quaternary structure, heterotrimer composed of an alpha, a beta and a gamma chain.

EIF-2 functions in the early steps of protein synthesis by forming a ternary complex with GTP and initiator tRNA. This is Translation initiation factor 2 subunit beta from Metallosphaera sedula (strain ATCC 51363 / DSM 5348 / JCM 9185 / NBRC 15509 / TH2).